The sequence spans 165 residues: uncharacterized protein (165 aa).

The tract at residues Glu28 to Thr97 is disordered. Pro residues predominate over residues Gly34 to Ile47. 2 stretches are compositionally biased toward polar residues: residues Lys54 to Asn66 and Ala73 to Glu94.

This is an uncharacterized protein from Rickettsia prowazekii (strain Madrid E).